The primary structure comprises 154 residues: Universal stress protein Sll1388 (154 aa).

Belongs to the universal stress protein A family.

This chain is Universal stress protein Sll1388, found in Synechocystis sp. (strain ATCC 27184 / PCC 6803 / Kazusa).